The chain runs to 502 residues: UDP-N-acetylmuramoylalanine--D-glutamate ligase (502 aa).

An ATP-binding site is contributed by 136–142 (GTNGKTT).

This sequence belongs to the MurCDEF family.

The protein localises to the cytoplasm. It catalyses the reaction UDP-N-acetyl-alpha-D-muramoyl-L-alanine + D-glutamate + ATP = UDP-N-acetyl-alpha-D-muramoyl-L-alanyl-D-glutamate + ADP + phosphate + H(+). It functions in the pathway cell wall biogenesis; peptidoglycan biosynthesis. Its function is as follows. Cell wall formation. Catalyzes the addition of glutamate to the nucleotide precursor UDP-N-acetylmuramoyl-L-alanine (UMA). This chain is UDP-N-acetylmuramoylalanine--D-glutamate ligase, found in Corynebacterium jeikeium (strain K411).